The sequence spans 321 residues: PI-PLC X domain-containing protein 3 (321 aa).

In terms of domain architecture, PI-PLC X-box spans 22–197 (SIHSIPLTNL…DYQVLVFYHS (176 aa)). Catalysis depends on residues histidine 37 and histidine 114.

Widely expressed, with highest levels in brain, followed by heart atrium. Not detected in small intestine, nor stomach.

It is found in the cytoplasm. In Mus musculus (Mouse), this protein is PI-PLC X domain-containing protein 3 (Plcxd3).